The following is a 413-amino-acid chain: Serine/threonine transporter SstT (413 aa).

A run of 10 helical transmembrane segments spans residues 18–38, 52–72, 86–106, 119–139, 145–165, 196–216, 221–241, 292–312, 320–340, and 360–380; these read LSLVTQILIGLIAGIALALFA, FVSALKAVAPILVFVLVMASI, ILFLYLLGTFAAAVVAVIASM, IAVSAPGGISEVLQSLLLSVV, ALMNANFIGILAWAIGMGVAI, LGIFGLVASTLATSGFGALIG, LAVLLGCMLFVALVMNPLIVF, VSIPLGATINMAGAAITITVL, LGIAVDIPTAILLSVVAAICA, and LFGIPSEIAMQVVAVGFIIGV.

This sequence belongs to the dicarboxylate/amino acid:cation symporter (DAACS) (TC 2.A.23) family.

It is found in the cell inner membrane. The catalysed reaction is L-serine(in) + Na(+)(in) = L-serine(out) + Na(+)(out). It carries out the reaction L-threonine(in) + Na(+)(in) = L-threonine(out) + Na(+)(out). In terms of biological role, involved in the import of serine and threonine into the cell, with the concomitant import of sodium (symport system). The protein is Serine/threonine transporter SstT of Pseudomonas fluorescens (strain Pf0-1).